The sequence spans 127 residues: Major sperm protein 55/57 (127 aa).

Position 2 is an N-acetylalanine (A2). One can recognise an MSP domain in the interval 9 to 126 (DIQTQPGTKI…RRKNLPIEYN (118 aa)).

As to expression, sperm.

Its subcellular location is the cell projection. It is found in the pseudopodium. The protein resides in the cytoplasm. The protein localises to the cytoskeleton. Central component in molecular interactions underlying sperm crawling. Forms an extensive filament system that extends from sperm villipoda, along the leading edge of the pseudopod. The chain is Major sperm protein 55/57 (msp-55) from Caenorhabditis elegans.